A 57-amino-acid polypeptide reads, in one-letter code: uncharacterized protein (57 aa).

A helical transmembrane segment spans residues 21-37 (GTYTLVVAFVLAFLVYS).

It is found in the host membrane. This is an uncharacterized protein from Human herpesvirus 6B (strain Z29) (HHV-6 variant B).